Here is a 505-residue protein sequence, read N- to C-terminus: Lysine--tRNA ligase (505 aa).

The Mg(2+) site is built by Glu-415 and Glu-422.

The protein belongs to the class-II aminoacyl-tRNA synthetase family. As to quaternary structure, homodimer. Mg(2+) is required as a cofactor.

Its subcellular location is the cytoplasm. It carries out the reaction tRNA(Lys) + L-lysine + ATP = L-lysyl-tRNA(Lys) + AMP + diphosphate. This Enterobacter sp. (strain 638) protein is Lysine--tRNA ligase.